A 367-amino-acid chain; its full sequence is MAFKLWLLDEETIYEHVFERYTQLEGQSGKLAQDLGIQDRRGGVLEITFEPSGLEGGRKKKRVRRRNKASSVEEDQNVAVDSYHVSVGQSISSLHSSRDNGNSTTGYVLWSTTPFFINWLLYSTSAAPFRLGSQVEVTCGSSCEGHKLELPRLVDLTGADRGKRGILELGAGISGILPVILGNFVDTYVSTDQKGILNKLKDNIMENLSQLTRKRCISRSLRLELPTVEPVGDADITAASLPSKSTLHLEVAALDWEKINLQDKKTHSLHPELSLIGETCSSVYVIAMDVIYNEYLIDPFLKTLKQLKHWLQTTYNLQFHVLVGIHLRSQEVTTLFLEKAIIEYDFTVYDIVDQVIQESRFNFYLIT.

Residues 55-74 form a disordered region; that stretch reads EGGRKKKRVRRRNKASSVEE. A compositionally biased stretch (basic residues) spans 58–68; it reads RKKKRVRRRNK. S-adenosyl-L-methionine is bound by residues Trp110, 170 to 172, Asp192, Trp256, and Met288; that span reads GAG.

This sequence belongs to the class I-like SAM-binding methyltransferase superfamily. RKM5 family.

Functionally, S-adenosyl-L-methionine-dependent protein-lysine N-methyltransferase that monomethylates 60S ribosomal protein L1 (RPL1A and RPL1B) at 'Lys-46'. This is Ribosomal lysine N-methyltransferase 5 (RKM5) from Saccharomyces cerevisiae (strain RM11-1a) (Baker's yeast).